A 421-amino-acid polypeptide reads, in one-letter code: Exopolysaccharide production protein ExoF (421 aa).

The signal sequence occupies residues 1–31 (MQSNRRSGKSAGSRMVSCFTRLALLAALAAS).

The protein resides in the periplasm. It participates in glycan metabolism; exopolysaccharide biosynthesis. In terms of biological role, involved in succinoglycan (EPS I) synthesis. Needed for the addition of the first sugar (galactose) to the isoprenoid carrier. The sequence is that of Exopolysaccharide production protein ExoF (exoF) from Rhizobium meliloti (strain 1021) (Ensifer meliloti).